The primary structure comprises 546 residues: NAD(P)H-quinone oxidoreductase chain 4 (546 aa).

The next 14 helical transmembrane spans lie at Phe24–Phe44, Phe56–Phe76, Met108–Val128, Pro132–Val152, Leu156–Trp176, Phe188–Phe208, Ile232–His252, Thr263–Leu283, Phe297–Phe317, Ile326–Ser346, Ala352–Ala372, Phe396–Val416, Val437–Met457, and Ile484–Val504.

This sequence belongs to the complex I subunit 4 family.

It is found in the cellular thylakoid membrane. The catalysed reaction is a plastoquinone + NADH + (n+1) H(+)(in) = a plastoquinol + NAD(+) + n H(+)(out). It carries out the reaction a plastoquinone + NADPH + (n+1) H(+)(in) = a plastoquinol + NADP(+) + n H(+)(out). In terms of biological role, NDH-1 shuttles electrons from NAD(P)H, via FMN and iron-sulfur (Fe-S) centers, to quinones in the respiratory chain. The immediate electron acceptor for the enzyme in this species is believed to be plastoquinone. Couples the redox reaction to proton translocation (for every two electrons transferred, four hydrogen ions are translocated across the cytoplasmic membrane), and thus conserves the redox energy in a proton gradient. The sequence is that of NAD(P)H-quinone oxidoreductase chain 4 from Prochlorococcus marinus subsp. pastoris (strain CCMP1986 / NIES-2087 / MED4).